The chain runs to 95 residues: MEVTDVRLRRVNTDGRMKAIASITIDHEFVVHDIRVIDGNNGMFVAMPSKRTPDGEFRDIAHPISSTTREKIQAAVLTEYDRVGQEEESTIEAGA.

It belongs to the SpoVG family.

Functionally, could be involved in septation. This is Putative septation protein SpoVG from Brevibacillus brevis (strain 47 / JCM 6285 / NBRC 100599).